A 314-amino-acid polypeptide reads, in one-letter code: Probable cell division protein WhiA (314 aa).

The H-T-H motif DNA-binding region spans 274-308 (SLKELGEMMSTGKISKSGVNHRLRKLNEMADKLRS).

Belongs to the WhiA family.

Involved in cell division and chromosome segregation. The sequence is that of Probable cell division protein WhiA from Staphylococcus saprophyticus subsp. saprophyticus (strain ATCC 15305 / DSM 20229 / NCIMB 8711 / NCTC 7292 / S-41).